The following is a 344-amino-acid chain: Glycerol-3-phosphate dehydrogenase [NAD(P)+] (344 aa).

Residues Ser-18, Tyr-19, His-39, and Lys-113 each coordinate NADPH. Sn-glycerol 3-phosphate-binding residues include Lys-113, Gly-142, and Thr-144. Ala-146 contacts NADPH. Sn-glycerol 3-phosphate is bound by residues Lys-198, Asp-251, Ser-261, Arg-262, and Asn-263. The Proton acceptor role is filled by Lys-198. Arg-262 is an NADPH binding site. Ile-286 and Glu-288 together coordinate NADPH.

Belongs to the NAD-dependent glycerol-3-phosphate dehydrogenase family.

Its subcellular location is the cytoplasm. The enzyme catalyses sn-glycerol 3-phosphate + NAD(+) = dihydroxyacetone phosphate + NADH + H(+). The catalysed reaction is sn-glycerol 3-phosphate + NADP(+) = dihydroxyacetone phosphate + NADPH + H(+). The protein operates within membrane lipid metabolism; glycerophospholipid metabolism. Functionally, catalyzes the reduction of the glycolytic intermediate dihydroxyacetone phosphate (DHAP) to sn-glycerol 3-phosphate (G3P), the key precursor for phospholipid synthesis. The polypeptide is Glycerol-3-phosphate dehydrogenase [NAD(P)+] (Blochmanniella pennsylvanica (strain BPEN)).